We begin with the raw amino-acid sequence, 365 residues long: 3-dehydroquinate synthase (365 aa).

NAD(+) is bound by residues 107–111 (GVIGD), 131–132 (TT), lysine 144, and lysine 153. Positions 186, 251, and 268 each coordinate Zn(2+).

This sequence belongs to the sugar phosphate cyclases superfamily. Dehydroquinate synthase family. Requires Co(2+) as cofactor. Zn(2+) serves as cofactor. NAD(+) is required as a cofactor.

It localises to the cytoplasm. The catalysed reaction is 7-phospho-2-dehydro-3-deoxy-D-arabino-heptonate = 3-dehydroquinate + phosphate. It functions in the pathway metabolic intermediate biosynthesis; chorismate biosynthesis; chorismate from D-erythrose 4-phosphate and phosphoenolpyruvate: step 2/7. In terms of biological role, catalyzes the conversion of 3-deoxy-D-arabino-heptulosonate 7-phosphate (DAHP) to dehydroquinate (DHQ). This chain is 3-dehydroquinate synthase, found in Picosynechococcus sp. (strain ATCC 27264 / PCC 7002 / PR-6) (Agmenellum quadruplicatum).